Reading from the N-terminus, the 318-residue chain is Transaldolase (318 aa).

Catalysis depends on Lys-132, which acts as the Schiff-base intermediate with substrate.

It belongs to the transaldolase family. Type 1 subfamily. Homodimer.

It localises to the cytoplasm. The catalysed reaction is D-sedoheptulose 7-phosphate + D-glyceraldehyde 3-phosphate = D-erythrose 4-phosphate + beta-D-fructose 6-phosphate. The protein operates within carbohydrate degradation; pentose phosphate pathway; D-glyceraldehyde 3-phosphate and beta-D-fructose 6-phosphate from D-ribose 5-phosphate and D-xylulose 5-phosphate (non-oxidative stage): step 2/3. Transaldolase is important for the balance of metabolites in the pentose-phosphate pathway. The polypeptide is Transaldolase (Shewanella pealeana (strain ATCC 700345 / ANG-SQ1)).